Reading from the N-terminus, the 824-residue chain is 4-methylaminobutanoate oxidase (formaldehyde-forming) (824 aa).

The residue at position 67 (His67) is a Pros-8alpha-FAD histidine.

It belongs to the GcvT family. It depends on FAD as a cofactor.

The catalysed reaction is 4-(methylamino)butanoate + O2 + H2O = 4-aminobutanoate + formaldehyde + H2O2. The protein operates within alkaloid degradation; nicotine degradation. Functionally, catalyzes the oxidative demethylation of 4-methylaminobutanoate produced from the pyrrolidine ring of nicotine. To a much lesser extent, can also use sarcosine as substrate, but is not active against dimethylglycine, methylaminopropionitrile, methylaminopropylamine, and alpha-methylaminobutanoate. The chain is 4-methylaminobutanoate oxidase (formaldehyde-forming) (abo) from Paenarthrobacter nicotinovorans (Arthrobacter nicotinovorans).